Consider the following 453-residue polypeptide: Protein FAM117A (453 aa).

Positions 1-25 are enriched in gly residues; the sequence is MAGAAAGGRGGGAWGPGRGGAGGLR. The interval 1 to 45 is disordered; the sequence is MAGAAAGGRGGGAWGPGRGGAGGLRRGCSPPAPAGSPRAGLQPLR. 2 positions are modified to phosphoserine: Ser29 and Ser67. The stretch at 149-175 forms a coiled coil; it reads TDHRKEISKLKQQLQRTKLSRSGKEKE. The segment at 159-201 is disordered; the sequence is KQQLQRTKLSRSGKEKERGSPLLGDHAVRGALRASPPSFPSGS. A phosphoserine mark is found at Ser178, Ser193, Ser201, and Ser213. A compositionally biased stretch (low complexity) spans 269-278; the sequence is SSPSMSLASP. Residues 269–320 form a disordered region; that stretch reads SSPSMSLASPQPCGLASHEEHRGAAEELASTPNDKASSPGHPAFLEDGSPSP. Thr299 is subject to Phosphothreonine. Phosphoserine occurs at positions 319 and 327. Thr354 is subject to Phosphothreonine. The segment covering 406 to 416 has biased composition (pro residues); it reads GSPLPPASPRP. A disordered region spans residues 406–453; sequence GSPLPPASPRPPPRKDPEASKASPLPFEPWQRTPPSEEPVLFQSSLMV. Residues Ser413 and Ser428 each carry the phosphoserine modification.

It belongs to the FAM117 family.

In Homo sapiens (Human), this protein is Protein FAM117A (FAM117A).